The chain runs to 212 residues: tRNA (guanine-N(7)-)-methyltransferase (212 aa).

Positions 44, 69, 96, and 118 each coordinate S-adenosyl-L-methionine. Residue aspartate 118 is part of the active site. Residue lysine 122 coordinates substrate. Residues 124-129 (RHEKRR) form an interaction with RNA region. Substrate contacts are provided by residues aspartate 154 and 191–194 (TEYE).

Belongs to the class I-like SAM-binding methyltransferase superfamily. TrmB family.

The catalysed reaction is guanosine(46) in tRNA + S-adenosyl-L-methionine = N(7)-methylguanosine(46) in tRNA + S-adenosyl-L-homocysteine. The protein operates within tRNA modification; N(7)-methylguanine-tRNA biosynthesis. Functionally, catalyzes the formation of N(7)-methylguanine at position 46 (m7G46) in tRNA. The protein is tRNA (guanine-N(7)-)-methyltransferase of Streptococcus suis (strain 05ZYH33).